Reading from the N-terminus, the 384-residue chain is S-adenosylmethionine synthase (384 aa).

H15 is a binding site for ATP. D17 is a binding site for Mg(2+). E43 is a binding site for K(+). L-methionine is bound by residues E56 and Q99. The flexible loop stretch occupies residues Q99–R109. ATP contacts are provided by residues D164–K166, R230–F231, D239, R245–K246, A262, and K266. D239 is a binding site for L-methionine. Residue K270 participates in L-methionine binding.

The protein belongs to the AdoMet synthase family. As to quaternary structure, homotetramer; dimer of dimers. Requires Mg(2+) as cofactor. K(+) is required as a cofactor.

It localises to the cytoplasm. It catalyses the reaction L-methionine + ATP + H2O = S-adenosyl-L-methionine + phosphate + diphosphate. Its pathway is amino-acid biosynthesis; S-adenosyl-L-methionine biosynthesis; S-adenosyl-L-methionine from L-methionine: step 1/1. Catalyzes the formation of S-adenosylmethionine (AdoMet) from methionine and ATP. The overall synthetic reaction is composed of two sequential steps, AdoMet formation and the subsequent tripolyphosphate hydrolysis which occurs prior to release of AdoMet from the enzyme. In Citrobacter koseri (strain ATCC BAA-895 / CDC 4225-83 / SGSC4696), this protein is S-adenosylmethionine synthase.